The sequence spans 472 residues: 3-isopropylmalate dehydratase large subunit (472 aa).

The [4Fe-4S] cluster site is built by C350, C411, and C414.

It belongs to the aconitase/IPM isomerase family. LeuC type 1 subfamily. In terms of assembly, heterodimer of LeuC and LeuD. It depends on [4Fe-4S] cluster as a cofactor.

The catalysed reaction is (2R,3S)-3-isopropylmalate = (2S)-2-isopropylmalate. It functions in the pathway amino-acid biosynthesis; L-leucine biosynthesis; L-leucine from 3-methyl-2-oxobutanoate: step 2/4. Functionally, catalyzes the isomerization between 2-isopropylmalate and 3-isopropylmalate, via the formation of 2-isopropylmaleate. This Alcanivorax borkumensis (strain ATCC 700651 / DSM 11573 / NCIMB 13689 / SK2) protein is 3-isopropylmalate dehydratase large subunit.